Consider the following 222-residue polypeptide: MFTKQVQESGVYKWFNDRLEIEAISDDISSKYVPPHVNIFYCLGGITLVCFIIQFATGFAMTFYYKPSVTEAFTSVQYLMNEVSFGWLIRSIHRWSASMMVLMMILHVFRVYLTGGFKNPRELTWITGVILAVITVSFGVTGYSLPWDQVGYWAVKIVSGVPEAIPLVGPLMVELIRGSASVGQATLTRFYSLHTFVLPWFIAVFMLMHFLMIRKQGISGPL.

Residues 39–59 (IFYCLGGITLVCFIIQFATGF) traverse the membrane as a helical segment. A heme c-binding site is contributed by C42. Residues H93 and H107 each contribute to the heme b site. 3 helical membrane passes run 97-117 (ASMM…TGGF), 123-143 (LTWI…VTGY), and 193-213 (LHTF…FLMI). The heme b site is built by H194 and H209.

This sequence belongs to the cytochrome b family. PetB subfamily. The 4 large subunits of the cytochrome b6-f complex are cytochrome b6, subunit IV (17 kDa polypeptide, PetD), cytochrome f and the Rieske protein, while the 4 small subunits are PetG, PetL, PetM and PetN. The complex functions as a dimer. Heme b serves as cofactor. It depends on heme c as a cofactor.

The protein resides in the cellular thylakoid membrane. Its function is as follows. Component of the cytochrome b6-f complex, which mediates electron transfer between photosystem II (PSII) and photosystem I (PSI), cyclic electron flow around PSI, and state transitions. The sequence is that of Cytochrome b6 from Prochlorothrix hollandica.